The sequence spans 382 residues: Low-specificity L-threonine aldolase (382 aa).

Residue Lys214 is modified to N6-(pyridoxal phosphate)lysine.

Belongs to the threonine aldolase family. Homotetramer. Requires pyridoxal 5'-phosphate as cofactor.

The enzyme catalyses L-threonine = acetaldehyde + glycine. It catalyses the reaction L-allo-threonine = acetaldehyde + glycine. The protein operates within amino-acid degradation; L-threonine degradation via aldolase pathway; acetaldehyde and glycine from L-threonine: step 1/1. The sequence is that of Low-specificity L-threonine aldolase (GLY1) from Eremothecium gossypii (strain ATCC 10895 / CBS 109.51 / FGSC 9923 / NRRL Y-1056) (Yeast).